We begin with the raw amino-acid sequence, 362 residues long: Guanine nucleotide-binding protein alpha-10 subunit (362 aa).

A lipid anchor (N-myristoyl glycine) is attached at Gly-2. Residue Cys-4 is the site of S-palmitoyl cysteine attachment. The region spanning 35–362 is the G-alpha domain; the sequence is LEQSVLLIGP…QENLKDTGMI (328 aa). Residues 38–51 are G1 motif; the sequence is SVLLIGPGESGKST. GTP is bound by residues 43–50, 184–190, 209–213, 278–281, and Ala-335; these read GPGESGKS, VRIRVPT, DCGGQ, and NKID. Ser-50 and Thr-190 together coordinate Mg(2+). The segment at 182-190 is G2 motif; it reads DIVRIRVPT. The segment at 205–214 is G3 motif; it reads LSVIDCGGQR. The G4 motif stretch occupies residues 274-281; the sequence is ILFLNKID. The interval 333–337 is G5 motif; it reads TCAIS.

The protein belongs to the G-alpha family. As to quaternary structure, g proteins are composed of 3 units; alpha, beta and gamma. The alpha chain contains the guanine nucleotide binding site.

Functionally, guanine nucleotide-binding proteins (G proteins) are involved as modulators or transducers in various transmembrane signaling systems. The protein is Guanine nucleotide-binding protein alpha-10 subunit (gpa-10) of Caenorhabditis briggsae.